We begin with the raw amino-acid sequence, 107 residues long: Nucleoid-associated protein BAbS19_I00290 (107 aa).

This sequence belongs to the YbaB/EbfC family. As to quaternary structure, homodimer.

The protein localises to the cytoplasm. It is found in the nucleoid. In terms of biological role, binds to DNA and alters its conformation. May be involved in regulation of gene expression, nucleoid organization and DNA protection. This is Nucleoid-associated protein BAbS19_I00290 from Brucella abortus (strain S19).